We begin with the raw amino-acid sequence, 89 residues long: Barrier-to-autointegration factor (89 aa).

An N-acetylmethionine modification is found at M1. T2 is subject to N-acetylthreonine; in Barrier-to-autointegration factor, N-terminally processed. Phosphothreonine; by VRK1 and VRK2 occurs at positions 2 and 3. At S4 the chain carries Phosphoserine; by VRK1 and VRK2. In terms of domain architecture, HhH spans 20 to 35 (VGSLAGIGDVLSKRLE).

It belongs to the BAF family. As to quaternary structure, homodimer. Heterodimerizes with BANF2. Interacts with ANKLE2/LEM4, leading to decreased phosphorylation by VRK1 and promoting dephosphorylation by protein phosphatase 2A (PP2A). Binds non-specifically to double-stranded DNA, and is found as a hexamer or dodecamer upon DNA binding. Binds to LEM domain-containing nuclear proteins such as LEMD3/MAN1, TMPO/LAP2 and EMD (emerin). Interacts with ANKLE1 (via LEM domain); the interaction may favor BANF1 dimerization. Interacts with CRX and LMNA (lamin-A). Binds linker histone H1.1 and core histones H3. Interacts with LEMD2 (via LEM domain). Interacts with PARP1; interaction takes place in response to oxidative DNA damage. Ser-4 is the major site of phosphorylation as compared to Thr-2 and Thr-3. Phosphorylation on Thr-2; Thr-3 and Ser-4 disrupts its ability to bind DNA and reduces its ability to bind LEM domain-containing proteins. Non phosphorylated BAF seems to enhance binding between EMD and LMNA. Dephosphorylated by protein phosphatase 2A (PP2A) following interaction with ANKLE2/LEM4 during mitotic exit, leading to mitotic nuclear envelope reassembly.

It is found in the nucleus. Its subcellular location is the chromosome. The protein resides in the nucleus envelope. It localises to the cytoplasm. Its function is as follows. Non-specific DNA-binding protein that plays key roles in mitotic nuclear reassembly, chromatin organization, DNA damage response, gene expression and intrinsic immunity against foreign DNA. Contains two non-specific double-stranded DNA (dsDNA)-binding sites which promote DNA cross-bridging. Plays a key role in nuclear membrane reformation at the end of mitosis by driving formation of a single nucleus in a spindle-independent manner. Transiently cross-bridges anaphase chromosomes via its ability to bridge distant DNA sites, leading to the formation of a dense chromatin network at the chromosome ensemble surface that limits membranes to the surface. Also acts as a negative regulator of innate immune activation by restricting CGAS activity toward self-DNA upon acute loss of nuclear membrane integrity. Outcompetes CGAS for DNA-binding, thereby preventing CGAS activation and subsequent damaging autoinflammatory responses. Also involved in DNA damage response: interacts with PARP1 in response to oxidative stress, thereby inhibiting the ADP-ribosyltransferase activity of PARP1. Involved in the recognition of exogenous dsDNA in the cytosol: associates with exogenous dsDNA immediately after its appearance in the cytosol at endosome breakdown and is required to avoid autophagy. This Mus musculus (Mouse) protein is Barrier-to-autointegration factor.